A 374-amino-acid chain; its full sequence is Chaperone protein DnaJ (374 aa).

The 66-residue stretch at 5 to 70 folds into the J domain; it reads DYYEILEIER…GKRQLYDRYG (66 aa). A CR-type zinc finger spans residues 136–213; it reads GCKKEIKIRY…CNGKGHENKE (78 aa). Positions 149, 152, 165, 168, 187, 190, 201, and 204 each coordinate Zn(2+). CXXCXGXG motif repeat units follow at residues 149-156, 165-172, 187-194, and 201-208; these read CPDCKGTG, CPDCGGRG, CPKCGGSG, and CPKCNGKG.

The protein belongs to the DnaJ family. As to quaternary structure, homodimer. Requires Zn(2+) as cofactor.

It is found in the cytoplasm. Functionally, participates actively in the response to hyperosmotic and heat shock by preventing the aggregation of stress-denatured proteins and by disaggregating proteins, also in an autonomous, DnaK-independent fashion. Unfolded proteins bind initially to DnaJ; upon interaction with the DnaJ-bound protein, DnaK hydrolyzes its bound ATP, resulting in the formation of a stable complex. GrpE releases ADP from DnaK; ATP binding to DnaK triggers the release of the substrate protein, thus completing the reaction cycle. Several rounds of ATP-dependent interactions between DnaJ, DnaK and GrpE are required for fully efficient folding. Also involved, together with DnaK and GrpE, in the DNA replication of plasmids through activation of initiation proteins. The polypeptide is Chaperone protein DnaJ (Wolinella succinogenes (strain ATCC 29543 / DSM 1740 / CCUG 13145 / JCM 31913 / LMG 7466 / NCTC 11488 / FDC 602W) (Vibrio succinogenes)).